Here is a 581-residue protein sequence, read N- to C-terminus: Proline--tRNA ligase (581 aa).

This sequence belongs to the class-II aminoacyl-tRNA synthetase family. ProS type 1 subfamily. As to quaternary structure, homodimer.

It is found in the cytoplasm. The catalysed reaction is tRNA(Pro) + L-proline + ATP = L-prolyl-tRNA(Pro) + AMP + diphosphate. Functionally, catalyzes the attachment of proline to tRNA(Pro) in a two-step reaction: proline is first activated by ATP to form Pro-AMP and then transferred to the acceptor end of tRNA(Pro). As ProRS can inadvertently accommodate and process non-cognate amino acids such as alanine and cysteine, to avoid such errors it has two additional distinct editing activities against alanine. One activity is designated as 'pretransfer' editing and involves the tRNA(Pro)-independent hydrolysis of activated Ala-AMP. The other activity is designated 'posttransfer' editing and involves deacylation of mischarged Ala-tRNA(Pro). The misacylated Cys-tRNA(Pro) is not edited by ProRS. This is Proline--tRNA ligase from Methylibium petroleiphilum (strain ATCC BAA-1232 / LMG 22953 / PM1).